The following is a 421-amino-acid chain: Serine hydroxymethyltransferase (421 aa).

Residues L118 and G122–L124 each bind (6S)-5,6,7,8-tetrahydrofolate. N6-(pyridoxal phosphate)lysine is present on K226.

The protein belongs to the SHMT family. As to quaternary structure, homodimer. The cofactor is pyridoxal 5'-phosphate.

The protein resides in the cytoplasm. It catalyses the reaction (6R)-5,10-methylene-5,6,7,8-tetrahydrofolate + glycine + H2O = (6S)-5,6,7,8-tetrahydrofolate + L-serine. The protein operates within one-carbon metabolism; tetrahydrofolate interconversion. It participates in amino-acid biosynthesis; glycine biosynthesis; glycine from L-serine: step 1/1. Its function is as follows. Catalyzes the reversible interconversion of serine and glycine with tetrahydrofolate (THF) serving as the one-carbon carrier. This reaction serves as the major source of one-carbon groups required for the biosynthesis of purines, thymidylate, methionine, and other important biomolecules. Also exhibits THF-independent aldolase activity toward beta-hydroxyamino acids, producing glycine and aldehydes, via a retro-aldol mechanism. The protein is Serine hydroxymethyltransferase of Mycoplasmopsis agalactiae (strain NCTC 10123 / CIP 59.7 / PG2) (Mycoplasma agalactiae).